We begin with the raw amino-acid sequence, 330 residues long: Diacylglycerol acyltransferase/mycolyltransferase Ag85B (330 aa).

The N-terminal stretch at 1–40 (MTDLSEKVRAWGRRLVVGAAAAATLPGLIGIAGGAATANA) is a signal peptide. 82–83 (LR) serves as a coordination point for substrate. Residues 98-108 (FEWYYQSGLSV) are fibronectin-binding. The cysteines at positions 127 and 132 are disulfide-linked. Residues S166 and D194 each coordinate substrate. S166 functions as the Nucleophile in the catalytic mechanism. Residue E270 is part of the active site. Substrate-binding positions include 272–275 (FVRS), K279, and 302–304 (HSW). The active site involves H302.

It belongs to the mycobacterial A85 antigen family.

It is found in the secreted. The catalysed reaction is 2 alpha,alpha'-trehalose 6-mycolate = alpha,alpha'-trehalose 6,6'-bismycolate + alpha,alpha-trehalose. It carries out the reaction an acyl-CoA + a 1,2-diacyl-sn-glycerol = a triacyl-sn-glycerol + CoA. In terms of biological role, the antigen 85 proteins (FbpA, FbpB, FbpC) are responsible for the high affinity of mycobacteria for fibronectin, a large adhesive glycoprotein, which facilitates the attachment of M.tuberculosis to murine alveolar macrophages (AMs). They also help to maintain the integrity of the cell wall by catalyzing the transfer of mycolic acids to cell wall arabinogalactan and through the synthesis of alpha,alpha-trehalose dimycolate (TDM, cord factor). They catalyze the transfer of a mycoloyl residue from one molecule of alpha,alpha-trehalose monomycolate (TMM) to another TMM, leading to the formation of TDM. This is Diacylglycerol acyltransferase/mycolyltransferase Ag85B (fbpB) from Mycobacterium intracellulare (strain ATCC 13950 / DSM 43223 / JCM 6384 / NCTC 13025 / 3600).